The chain runs to 156 residues: 17.7 kDa class II heat shock protein (156 aa).

One can recognise a sHSP domain in the interval 39-156 (DAKAMAATPA…KPKTIQVQVA (118 aa)).

Belongs to the small heat shock protein (HSP20) family. In terms of assembly, may form oligomeric structures.

The protein resides in the cytoplasm. The polypeptide is 17.7 kDa class II heat shock protein (HSP17.7) (Arabidopsis thaliana (Mouse-ear cress)).